Here is a 415-residue protein sequence, read N- to C-terminus: Actin-like protein 7B (415 aa).

The segment at Met-1–Ala-35 is disordered. Ser-6 is modified (phosphoserine).

This sequence belongs to the actin family.

It localises to the cytoplasm. Its subcellular location is the cytoskeleton. The sequence is that of Actin-like protein 7B (ACTL7B) from Macaca fascicularis (Crab-eating macaque).